The following is a 197-amino-acid chain: Gastrula zinc finger protein XlCGF17.1 (197 aa).

C2H2-type zinc fingers lie at residues 6–28 (ISCS…QMTH), 34–56 (YSCS…QKIH), 62–84 (FSCS…HRTH), 90–112 (FFCS…RRTH), 118–140 (FSCS…YRTH), 146–169 (FSCS…RRSH), and 175–197 (FSCS…LRTH).

This sequence belongs to the krueppel C2H2-type zinc-finger protein family.

It localises to the nucleus. May be involved in transcriptional regulation. In Xenopus laevis (African clawed frog), this protein is Gastrula zinc finger protein XlCGF17.1.